Reading from the N-terminus, the 420-residue chain is Tyrosine--tRNA ligase (420 aa).

Position 36 (Y36) interacts with L-tyrosine. The 'HIGH' region motif lies at 41–50 (PTADSMHIGH). Positions 170 and 174 each coordinate L-tyrosine. The short motif at 231–235 (KFGKS) is the 'KMSKS' region element. K234 serves as a coordination point for ATP. Residues 353-420 (TNIVDFIVEA…KKKYFMVKYK (68 aa)) enclose the S4 RNA-binding domain.

Belongs to the class-I aminoacyl-tRNA synthetase family. TyrS type 1 subfamily. In terms of assembly, homodimer.

It is found in the cytoplasm. The enzyme catalyses tRNA(Tyr) + L-tyrosine + ATP = L-tyrosyl-tRNA(Tyr) + AMP + diphosphate + H(+). Functionally, catalyzes the attachment of tyrosine to tRNA(Tyr) in a two-step reaction: tyrosine is first activated by ATP to form Tyr-AMP and then transferred to the acceptor end of tRNA(Tyr). The sequence is that of Tyrosine--tRNA ligase from Staphylococcus carnosus (strain TM300).